We begin with the raw amino-acid sequence, 354 residues long: UPF0283 membrane protein HI_0043 (354 aa).

3 consecutive transmembrane segments (helical) span residues 57-77 (LLKF…VQWI), 87-107 (IYLA…KEII), and 211-231 (ESAV…FIAW).

The protein belongs to the UPF0283 family.

It is found in the cell inner membrane. This is UPF0283 membrane protein HI_0043 from Haemophilus influenzae (strain ATCC 51907 / DSM 11121 / KW20 / Rd).